A 215-amino-acid polypeptide reads, in one-letter code: Cytochrome c biogenesis ATP-binding export protein CcmA (215 aa).

The region spanning 3–215 is the ABC transporter domain; that stretch reads LEAENLAGER…MAAFSVEDIA (213 aa). 35–42 provides a ligand contact to ATP; sequence GPNGSGKS.

This sequence belongs to the ABC transporter superfamily. CcmA exporter (TC 3.A.1.107) family. In terms of assembly, the complex is composed of two ATP-binding proteins (CcmA) and two transmembrane proteins (CcmB).

Its subcellular location is the cell inner membrane. The catalysed reaction is heme b(in) + ATP + H2O = heme b(out) + ADP + phosphate + H(+). Functionally, part of the ABC transporter complex CcmAB involved in the biogenesis of c-type cytochromes; once thought to export heme, this seems not to be the case, but its exact role is uncertain. Responsible for energy coupling to the transport system. This chain is Cytochrome c biogenesis ATP-binding export protein CcmA, found in Brucella melitensis biotype 1 (strain ATCC 23456 / CCUG 17765 / NCTC 10094 / 16M).